Reading from the N-terminus, the 407-residue chain is MSDLHHLLTFPERPISESSYLPELTRLLSAGIPATYTLEQAAAFERGEEVTEEDSNTTPLHILCRSLPSFEGSSKLSEDEESVVLKLMDTLLEYGAGWNFLDYENKHIGDLVLERKYPQDHCIYQRIVDAGVSAELLLRKIDGGEIEFIEDPEDAATEAATEAATEAEVIEGVTKGSEEAPFEDATAADQATYLKTDLEYTDDALVTKENRDGVMMDWETDIMSMAAKSLVSTRSTDECVVLNIGFGMGIIDNFIQDEKVTKHYICEAHPDVLAKMKETGWFDKENVVILEGRWQSRLNELLDQGEVFFDGIYYDTFSEHYQDMLDLYDVIVGLLKPEGTFSFFNGLGADRPVCYDVYRKIVELDVANYGMECRYQVINLRTLPNWNDVKRSYFNCTYYYHPEIRFA.

Residues 186-407 (TAADQATYLK…YYYHPEIRFA (222 aa)) form the RMT2 domain. S-adenosyl-L-methionine contacts are provided by residues Tyr-193, Met-223, 246-251 (FGMGII), 267-269 (EAH), 294-295 (WQ), and Asp-315.

It belongs to the class I-like SAM-binding methyltransferase superfamily. RMT2 methyltransferase family. In terms of assembly, monomer.

The protein localises to the cytoplasm. It localises to the nucleus. S-adenosyl-L-methionine-dependent protein-arginine N-methyltransferase that methylates the delta-nitrogen atom of arginine residues to form N5-methylarginine (type IV) in target proteins. Monomethylates ribosomal protein L12. This Kluyveromyces lactis (strain ATCC 8585 / CBS 2359 / DSM 70799 / NBRC 1267 / NRRL Y-1140 / WM37) (Yeast) protein is Protein arginine N-methyltransferase 2.